Reading from the N-terminus, the 548-residue chain is Biotin-dependent acetyl-/propionyl-coenzyme A carboxylase beta5 subunit (548 aa).

A disordered region spans residues Met-1–His-23. A compositionally biased stretch (basic and acidic residues) spans Arg-7–Asp-21. The CoA carboxyltransferase N-terminal domain maps to Thr-25 to Gln-281. The region spanning Asp-295 to Lys-541 is the CoA carboxyltransferase C-terminal domain.

It belongs to the AccD/PCCB family. The biotin-dependent acyl-CoA carboxylase complex is composed of AccA3, which contains the biotin carboxylase (BC) and biotin carboxyl carrier protein (BCCP) domains, and AccD5, which contains the carboxyl transferase (CT) domain.

It catalyses the reaction N(6)-carboxybiotinyl-L-lysyl-[protein] + acetyl-CoA = N(6)-biotinyl-L-lysyl-[protein] + malonyl-CoA. The enzyme catalyses N(6)-carboxybiotinyl-L-lysyl-[protein] + propanoyl-CoA = methylmalonyl-CoA + N(6)-biotinyl-L-lysyl-[protein]. The protein operates within lipid metabolism; mycolic acid biosynthesis. Functionally, component of a biotin-dependent acyl-CoA carboxylase complex. This subunit transfers the CO2 from carboxybiotin to the CoA ester substrate. When associated with the alpha3 subunit AccA3, is involved in the carboxylation of acetyl-CoA and propionyl-CoA. The protein is Biotin-dependent acetyl-/propionyl-coenzyme A carboxylase beta5 subunit (accD5) of Mycobacterium tuberculosis (strain CDC 1551 / Oshkosh).